A 389-amino-acid chain; its full sequence is Sedoheptulose-1,7-bisphosphatase, chloroplastic (389 aa).

The cysteines at positions 115 and 120 are disulfide-linked. Mg(2+)-binding residues include Asp126, Glu155, Asp173, Leu175, and Asp176. Substrate is bound by residues 176–179 (DGSS), Tyr287, and Lys317. Glu323 is a Mg(2+) binding site.

It belongs to the FBPase class 1 family. In terms of assembly, homodimer. The cofactor is Mg(2+).

It is found in the plastid. Its subcellular location is the chloroplast. It catalyses the reaction D-sedoheptulose 1,7-bisphosphate + H2O = D-sedoheptulose 7-phosphate + phosphate. Its pathway is carbohydrate biosynthesis; Calvin cycle. This Chlamydomonas reinhardtii (Chlamydomonas smithii) protein is Sedoheptulose-1,7-bisphosphatase, chloroplastic (CSBP).